Reading from the N-terminus, the 632-residue chain is MTATPANSGSNPRKFSEKIALHNQKQAEETRAFDELMSDLTVSRVQFQKLQQLRLAQTRAQYYGGSLPNVNQISSSPNDFQPSFHPMDNIRGMRHHGLVERVSRNRLHSSHHRPVEKHGRQCDSSPYGSVYLSPPPDNNWRRTNSDSALHTSASSSKLQDAFMGGNQAMLRAPKPPQRNPSLQDGEMNNFGEAFSYPTSMTEENMLNVTKPLPKQIWEAQKVQCITSRPRSCEVPGIKVFPSSDSNASLSHYQGSLNTGGSLPDLTNLHFPSPLPTPLDPDDTVYANINAENSSGLPAAMTHLGISNSQGIQNTCSNPSIQATMNNNVNNHTPPGRNNPTLHPSLRLSSLSNPSLPTSALGSSPRRRHTPVSPLTLTPGSESNRSISNQFSPTSPMDMLPNSQGVSMDRCPLSLPPLEPPPPYPLYTDQPQPQLHHTQQQMHESPESQNFQPPSPVPCPPLDLNLANSSLSGFFGDSFFDQQQPTKQGKYLWQQQEQYDMFGSPSSSLPNTNAFFDPNMNLQYSQASLMGLGGSHGSLQDSFHLRPNYLYSNYGGSVPNIILTDDSSNSLSKDISNAVAGVSELGFDADNTFQFDDELKLGPLSLDGLSMLSDPDMVLPDPSIEDSFRSDKL.

S66 carries the post-translational modification Phosphoserine. Residues 105 to 115 (NRLHSSHHRPV) are compositionally biased toward basic residues. The interval 105–156 (NRLHSSHHRPVEKHGRQCDSSPYGSVYLSPPPDNNWRRTNSDSALHTSASSS) is disordered. S133 is subject to Phosphoserine. S145 is subject to Phosphoserine; by SIK2. Residues 145–156 (SDSALHTSASSS) are compositionally biased toward low complexity. T151 is subject to Phosphothreonine. S293 carries the post-translational modification Phosphoserine. A compositionally biased stretch (polar residues) spans 310 to 338 (GIQNTCSNPSIQATMNNNVNNHTPPGRNN). Positions 310 to 455 (GIQNTCSNPS…ESQNFQPPSP (146 aa)) are disordered. Positions 339–360 (PTLHPSLRLSSLSNPSLPTSAL) are enriched in low complexity. S372 and S391 each carry phosphoserine. Residues 372–405 (SPLTLTPGSESNRSISNQFSPTSPMDMLPNSQGV) are compositionally biased toward polar residues. The span at 413–424 (SLPPLEPPPPYP) shows a compositional bias: pro residues. Over residues 425-440 (LYTDQPQPQLHHTQQQ) the composition is skewed to low complexity. At S556 the chain carries Phosphoserine.

This sequence belongs to the TORC family. As to quaternary structure, binding, as a tetramer, through its N-terminal region, with the bZIP domain of creb1 enhances recruitment of taf4 to the promoter. 'Arg-300' in the bZIP domain of creb1 is essential for this interaction.

The protein localises to the nucleus. It localises to the cytoplasm. Transcriptional coactivator for creb1 which activates transcription through both consensus and variant cAMP response element (CRE) sites. Acts as a coactivator, in the SIK/TORC signaling pathway, being active when dephosphorylated and acts independently of creb1 'Ser-119' phosphorylation. Enhances the interaction of creb1 with taf4. Regulates the expression of specific CREB-activated genes such as the steroidogenic gene, StAR. Potent coactivator of ppargc1a and inducer of mitochondrial biogenesis in muscle cells. The chain is CREB-regulated transcription coactivator 3 (crtc3) from Xenopus laevis (African clawed frog).